The sequence spans 277 residues: Large ribosomal subunit protein uL2 (277 aa).

Residues 222 to 277 (GVAMNPVDHPHGGGEGRTSGGRHPVTPWGKPTKGKKTRSNKATDKFIMRSRHQRKK) are disordered.

This sequence belongs to the universal ribosomal protein uL2 family. In terms of assembly, part of the 50S ribosomal subunit. Forms a bridge to the 30S subunit in the 70S ribosome.

One of the primary rRNA binding proteins. Required for association of the 30S and 50S subunits to form the 70S ribosome, for tRNA binding and peptide bond formation. It has been suggested to have peptidyltransferase activity; this is somewhat controversial. Makes several contacts with the 16S rRNA in the 70S ribosome. This Brucella canis (strain ATCC 23365 / NCTC 10854 / RM-666) protein is Large ribosomal subunit protein uL2.